The sequence spans 175 residues: Shikimate kinase (175 aa).

12–17 (GAGKTT) contributes to the ATP binding site. Thr-16 contributes to the Mg(2+) binding site. Substrate is bound by residues Asp-34, Arg-58, and Gly-80. Arg-117 is a binding site for ATP. Arg-136 serves as a coordination point for substrate.

It belongs to the shikimate kinase family. As to quaternary structure, monomer. It depends on Mg(2+) as a cofactor.

Its subcellular location is the cytoplasm. It catalyses the reaction shikimate + ATP = 3-phosphoshikimate + ADP + H(+). It functions in the pathway metabolic intermediate biosynthesis; chorismate biosynthesis; chorismate from D-erythrose 4-phosphate and phosphoenolpyruvate: step 5/7. Functionally, catalyzes the specific phosphorylation of the 3-hydroxyl group of shikimic acid using ATP as a cosubstrate. The polypeptide is Shikimate kinase (Saccharopolyspora erythraea (strain ATCC 11635 / DSM 40517 / JCM 4748 / NBRC 13426 / NCIMB 8594 / NRRL 2338)).